A 412-amino-acid chain; its full sequence is Multifunctional CCA protein (412 aa).

The ATP site is built by Gly8 and Arg11. The CTP site is built by Gly8 and Arg11. Residues Glu21 and Asp23 each contribute to the Mg(2+) site. Arg91, Arg137, and Arg140 together coordinate ATP. Arg91, Arg137, and Arg140 together coordinate CTP. Positions 228 to 329 (CGIHTLMSLQ…WRLLQRLDVL (102 aa)) constitute an HD domain.

Belongs to the tRNA nucleotidyltransferase/poly(A) polymerase family. Bacterial CCA-adding enzyme type 1 subfamily. In terms of assembly, monomer. Can also form homodimers and oligomers. It depends on Mg(2+) as a cofactor. Ni(2+) is required as a cofactor.

It catalyses the reaction a tRNA precursor + 2 CTP + ATP = a tRNA with a 3' CCA end + 3 diphosphate. The catalysed reaction is a tRNA with a 3' CCA end + 2 CTP + ATP = a tRNA with a 3' CCACCA end + 3 diphosphate. In terms of biological role, catalyzes the addition and repair of the essential 3'-terminal CCA sequence in tRNAs without using a nucleic acid template. Adds these three nucleotides in the order of C, C, and A to the tRNA nucleotide-73, using CTP and ATP as substrates and producing inorganic pyrophosphate. tRNA 3'-terminal CCA addition is required both for tRNA processing and repair. Also involved in tRNA surveillance by mediating tandem CCA addition to generate a CCACCA at the 3' terminus of unstable tRNAs. While stable tRNAs receive only 3'-terminal CCA, unstable tRNAs are marked with CCACCA and rapidly degraded. The polypeptide is Multifunctional CCA protein (Acinetobacter baumannii (strain SDF)).